The following is a 231-amino-acid chain: Protein PIMREG (231 aa).

Residues 1-44 are disordered; that stretch reads MASQWQGMRTSVRRRSLLKEEQLEKKEVTRSAGGHPETGPLGSL. Phosphoserine is present on residues Ser-11 and Ser-16. Short sequence motifs (D-box) lie at residues 14–17 and 53–56; these read RRSL and PLRA. Residues 17–29 show a composition bias toward basic and acidic residues; that stretch reads LLKEEQLEKKEVT. Ser-72 is modified (phosphoserine). Disordered regions lie at residues 115–138 and 152–197; these read KVRRKRGAQKDRGSPPPSLSQKNT and HLRL…DLEP. Phosphoserine; by Uhmk1; in vitro is present on Ser-128. Polar residues predominate over residues 178–190; the sequence is PCSSTEPLCSPSE. 2 positions are modified to phosphoserine: Ser-191 and Ser-193.

In terms of assembly, interacts with PICALM; this interaction may target PICALM to the nucleus. During mitosis, associates with HDAC2 and MTA2 subunits of the chromatin-remodeling NuRD complex; this association is strongest at prometaphase and decreases as the cell progresses through metaphase and anaphase. Ubiquitinated by the anaphase-promoting complex/cyclosome (APC/C) complex in the presence of FZR1, leading to its degradation by the proteasome during mitotic exit. However, degradation is not essential for normal mitotic progression within a single cell cycle. As to expression, mainly expressed in thymus and ovary. Expressed in all T-cell subpopulations isolated from the thymus, macrophages, pro-erythrocytes, granulocytes, mast cells and progenitor cells.

It is found in the nucleus. Its subcellular location is the nucleolus. During mitosis, may play a role in the metaphase-to-anaphase transition. The chain is Protein PIMREG from Mus musculus (Mouse).